We begin with the raw amino-acid sequence, 345 residues long: KH domain-containing, RNA-binding, signal transduction-associated protein 2 (345 aa).

A KH domain is found at 65–131; that stretch reads LIPVKQYPKF…AKHAHLSDEL (67 aa). Disordered regions lie at residues 178 to 224 and 321 to 345; these read LNGS…TRGA and SRSTLKAPLQRPARAGYREHPYGRY. Residues 336 to 345 are compositionally biased toward basic and acidic residues; it reads GYREHPYGRY.

The protein belongs to the KHDRBS family.

The protein localises to the nucleus. RNA-binding protein that plays a role in the regulation of alternative splicing. This is KH domain-containing, RNA-binding, signal transduction-associated protein 2 (khdrbs2) from Xenopus tropicalis (Western clawed frog).